Here is a 443-residue protein sequence, read N- to C-terminus: MSNTESIIVSQTKTTSWRKSDTTWTLGLFGTAIGAGVLFFPIRAGFGGLIPILLMLVLAYPIAFYCHRALARLCLSGSNPSGNITETVEEHFGKTGGVVITFLYFFAICPLLWIYGVTITNTFMTFWENQLQMPALNRGFVALFLLLLMAFVIWFGKDLMVKVMSFLVFPFIASLILISLSLIPYWNSAVIDQVSMSDLSFTGHDGILVTVWLGISIMVFSFNFSPIVSSFVVSKREEYEGEFGKEFTEQKCSKIIGRASLLMVAVVMFFAFSCLFTLSPQNMAEAKAQNIPVLSYLANHFATMTGTKSTFATVLEYGASIIALVAIFKSFFGHYLGTLEGLNGLVLKFGYKGDKKKVSVGKLNTISMIFIMGSTWVVAYANPNILDLIEAMGAPIIASLLCLLPMFAIRKVPALAKFRGRTENLFVTAVGLLTILNIVYKLF.

The next 11 helical transmembrane spans lie at 22-42 (TTWT…FFPI), 44-64 (AGFG…PIAF), 97-117 (GVVI…IYGV), 140-160 (FVAL…KDLM), 163-183 (VMSF…LSLI), 207-227 (ILVT…FSPI), 259-279 (ASLL…FTLS), 319-339 (ASII…LGTL), 366-386 (ISMI…PNIL), 389-409 (IEAM…MFAI), and 423-443 (ENLF…YKLF).

This sequence belongs to the amino acid/polyamine transporter 2 family. SdaC/TdcC subfamily.

It is found in the cell inner membrane. It carries out the reaction L-threonine(in) + H(+)(in) = L-threonine(out) + H(+)(out). The catalysed reaction is L-serine(in) + H(+)(in) = L-serine(out) + H(+)(out). Involved in the import of threonine and serine into the cell, with the concomitant import of a proton (symport system). This Enterobacter sp. (strain 638) protein is Threonine/serine transporter TdcC.